The chain runs to 479 residues: FK506-binding protein 4 (479 aa).

Disordered stretches follow at residues 39-106 (IDPD…ARKL), 141-162 (VKGK…EGLD), and 205-367 (GNYV…KTTG). 4 stretches are compositionally biased toward acidic residues: residues 40-49 (DPDEAPEFDD), 68-93 (LDEE…DEEV), 148-162 (TDDD…EGLD), and 214-256 (PRDD…DLDG). Composition is skewed to basic and acidic residues over residues 272-299 (APKL…DKAK), 325-334 (AKPEQKETKK), and 348-364 (SKER…KAEK). The region spanning 393-479 (GNTVAMRYIG…IFDVKLLEIK (87 aa)) is the PPIase FKBP-type domain.

The protein belongs to the FKBP-type PPIase family. FKBP3/4 subfamily. In terms of assembly, binds to histones H3 and H4.

Its subcellular location is the nucleus. It catalyses the reaction [protein]-peptidylproline (omega=180) = [protein]-peptidylproline (omega=0). Inhibited by both FK506 and rapamycin. PPIase that acts as a histone chaperone. Histone proline isomerase that increases the rate of cis-trans isomerization at prolines on the histone H3 N-terminal tail. Proline isomerization influences H3 methylation thereby regulating gene expression. The polypeptide is FK506-binding protein 4 (fpr4) (Emericella nidulans (strain FGSC A4 / ATCC 38163 / CBS 112.46 / NRRL 194 / M139) (Aspergillus nidulans)).